The sequence spans 373 residues: Alanine racemase (373 aa).

K35 acts as the Proton acceptor; specific for D-alanine in catalysis. An N6-(pyridoxal phosphate)lysine modification is found at K35. Position 130 (R130) interacts with substrate. Catalysis depends on Y253, which acts as the Proton acceptor; specific for L-alanine. A substrate-binding site is contributed by M305.

This sequence belongs to the alanine racemase family. Requires pyridoxal 5'-phosphate as cofactor.

It catalyses the reaction L-alanine = D-alanine. The protein operates within amino-acid biosynthesis; D-alanine biosynthesis; D-alanine from L-alanine: step 1/1. Its function is as follows. Catalyzes the interconversion of L-alanine and D-alanine. May also act on other amino acids. The protein is Alanine racemase (alr) of Cupriavidus necator (strain ATCC 17699 / DSM 428 / KCTC 22496 / NCIMB 10442 / H16 / Stanier 337) (Ralstonia eutropha).